The following is a 207-amino-acid chain: ATP-dependent Clp protease proteolytic subunit 2 (207 aa).

Catalysis depends on Ser-102, which acts as the Nucleophile. His-127 is an active-site residue.

Belongs to the peptidase S14 family. In terms of assembly, fourteen ClpP subunits assemble into 2 heptameric rings which stack back to back to give a disk-like structure with a central cavity, resembling the structure of eukaryotic proteasomes.

Its subcellular location is the cytoplasm. It catalyses the reaction Hydrolysis of proteins to small peptides in the presence of ATP and magnesium. alpha-casein is the usual test substrate. In the absence of ATP, only oligopeptides shorter than five residues are hydrolyzed (such as succinyl-Leu-Tyr-|-NHMec, and Leu-Tyr-Leu-|-Tyr-Trp, in which cleavage of the -Tyr-|-Leu- and -Tyr-|-Trp bonds also occurs).. In terms of biological role, cleaves peptides in various proteins in a process that requires ATP hydrolysis. Has a chymotrypsin-like activity. Plays a major role in the degradation of misfolded proteins. This chain is ATP-dependent Clp protease proteolytic subunit 2, found in Bifidobacterium longum (strain NCC 2705).